A 186-amino-acid chain; its full sequence is Pyridoxal 5'-phosphate synthase subunit PdxT (186 aa).

47 to 49 (GES) provides a ligand contact to L-glutamine. The active-site Nucleophile is the C76. Residues R102 and 130-131 (IR) each bind L-glutamine. Active-site charge relay system residues include H166 and E168.

It belongs to the glutaminase PdxT/SNO family. As to quaternary structure, in the presence of PdxS, forms a dodecamer of heterodimers. Only shows activity in the heterodimer.

The enzyme catalyses aldehydo-D-ribose 5-phosphate + D-glyceraldehyde 3-phosphate + L-glutamine = pyridoxal 5'-phosphate + L-glutamate + phosphate + 3 H2O + H(+). It catalyses the reaction L-glutamine + H2O = L-glutamate + NH4(+). It functions in the pathway cofactor biosynthesis; pyridoxal 5'-phosphate biosynthesis. Its function is as follows. Catalyzes the hydrolysis of glutamine to glutamate and ammonia as part of the biosynthesis of pyridoxal 5'-phosphate. The resulting ammonia molecule is channeled to the active site of PdxS. The chain is Pyridoxal 5'-phosphate synthase subunit PdxT from Staphylococcus epidermidis (strain ATCC 35984 / DSM 28319 / BCRC 17069 / CCUG 31568 / BM 3577 / RP62A).